A 304-amino-acid polypeptide reads, in one-letter code: Uricase (304 aa).

N-acetylalanine is present on Ala-2. N6-acetyllysine; alternate occurs at positions 10 and 23. 2 positions are modified to N6-succinyllysine; alternate: Lys-10 and Lys-23. Residue Lys-23 is the Charge relay system of the active site. 2 positions are modified to N6-acetyllysine: Lys-27 and Lys-36. Ser-39 and Ser-63 each carry phosphoserine. Residue Thr-68 is the Charge relay system of the active site. Urate-binding residues include Thr-68 and Asp-69. Lys-118, Lys-122, and Lys-164 each carry N6-acetyllysine. Residue Phe-170 coordinates urate. An N6-acetyllysine mark is found at Lys-175 and Lys-185. Arg-187 provides a ligand contact to urate. N6-acetyllysine; alternate occurs at positions 221 and 228. N6-succinyllysine; alternate occurs at positions 221 and 228. The residue at position 232 (Ser-232) is a Phosphoserine. Urate is bound by residues Val-235, Gln-236, and Asn-262. The Charge relay system role is filled by His-264. An N6-acetyllysine modification is found at Lys-278. Tyr-289 is subject to Phosphotyrosine. The Microbody targeting signal signature appears at 302-304 (SRL).

This sequence belongs to the uricase family. In terms of assembly, homotetramer.

The protein localises to the peroxisome. The catalysed reaction is urate + O2 + H2O = 5-hydroxyisourate + H2O2. The protein operates within purine metabolism; urate degradation; (S)-allantoin from urate: step 1/3. Catalyzes the oxidation of uric acid to 5-hydroxyisourate, which is further processed to form (S)-allantoin. The sequence is that of Uricase (UOX) from Sus scrofa (Pig).